The primary structure comprises 214 residues: uncharacterized protein (214 aa).

The first 17 residues, 1-17, serve as a signal peptide directing secretion; it reads MWCFIVFLTIFLPTLEG. Residues asparagine 88 and asparagine 139 are each glycosylated (N-linked (GlcNAc...) asparagine).

In terms of tissue distribution, component of the acid-insoluble organic matrix of calcified layers of the shell (at protein level).

It is found in the secreted. This is an uncharacterized protein from Lottia gigantea (Giant owl limpet).